A 371-amino-acid chain; its full sequence is Methionine import ATP-binding protein MetN (371 aa).

Positions Met1–Pro22 are disordered. Positions Ile27–Val268 constitute an ABC transporter domain. Gly65–Ser72 contributes to the ATP binding site.

The protein belongs to the ABC transporter superfamily. Methionine importer (TC 3.A.1.24) family. The complex is composed of two ATP-binding proteins (MetN), two transmembrane proteins (MetI) and a solute-binding protein (MetQ).

Its subcellular location is the cell inner membrane. The enzyme catalyses L-methionine(out) + ATP + H2O = L-methionine(in) + ADP + phosphate + H(+). It catalyses the reaction D-methionine(out) + ATP + H2O = D-methionine(in) + ADP + phosphate + H(+). In terms of biological role, part of the ABC transporter complex MetNIQ involved in methionine import. Responsible for energy coupling to the transport system. The sequence is that of Methionine import ATP-binding protein MetN from Rhodopseudomonas palustris (strain BisB5).